We begin with the raw amino-acid sequence, 253 residues long: tRNA pseudouridine synthase A (253 aa).

The Nucleophile role is filled by aspartate 52. Tyrosine 110 contacts substrate.

The protein belongs to the tRNA pseudouridine synthase TruA family. Homodimer.

It carries out the reaction uridine(38/39/40) in tRNA = pseudouridine(38/39/40) in tRNA. Its function is as follows. Formation of pseudouridine at positions 38, 39 and 40 in the anticodon stem and loop of transfer RNAs. This Thermus thermophilus (strain ATCC BAA-163 / DSM 7039 / HB27) protein is tRNA pseudouridine synthase A.